Here is a 125-residue protein sequence, read N- to C-terminus: Holo-[acyl-carrier-protein] synthase (125 aa).

Mg(2+)-binding residues include Asp-8 and Glu-57.

The protein belongs to the P-Pant transferase superfamily. AcpS family. The cofactor is Mg(2+).

The protein resides in the cytoplasm. It catalyses the reaction apo-[ACP] + CoA = holo-[ACP] + adenosine 3',5'-bisphosphate + H(+). Transfers the 4'-phosphopantetheine moiety from coenzyme A to a Ser of acyl-carrier-protein. This Natranaerobius thermophilus (strain ATCC BAA-1301 / DSM 18059 / JW/NM-WN-LF) protein is Holo-[acyl-carrier-protein] synthase.